Reading from the N-terminus, the 898-residue chain is Endoplasmic reticulum metallopeptidase 1 (898 aa).

The residue at position 1 (Met-1) is an N-acetylmethionine. The tract at residues 1 to 59 (MEWSSESAAVRRHRGTAERREGQAAASHPQREASAQEDARGGGRMRGRTESGGESRGAK) is disordered. Topologically, residues 1–66 (MEWSSESAAV…GAKTALSEAR (66 aa)) are cytoplasmic. Basic and acidic residues predominate over residues 37–57 (EDARGGGRMRGRTESGGESRG). Residues 67-87 (TALALALYLLALRALVQLSLQ) traverse the membrane as a helical segment. Topologically, residues 88–393 (RLVLSRTSGL…SSSEYRHGSM (306 aa)) are lumenal. Asn-176 carries N-linked (GlcNAc...) asparagine glycosylation. Cys-198 and Cys-216 are joined by a disulfide. 2 residues coordinate Zn(2+): His-199 and Asp-211. Glu-245 functions as the Proton acceptor in the catalytic mechanism. Zn(2+) is bound by residues Glu-246, Glu-272, and His-348. A helical membrane pass occupies residues 394 to 414 (VFFDVLGLLVIAYPSRVGSII). The Cytoplasmic portion of the chain corresponds to 415–451 (NYMVVMAVVLYLGRKLLRPNHSNSNYVRDFLCGLGIT). The helical transmembrane segment at 452 to 472 (FISWFTSLVTVLIIAVFVSLI) threads the bilayer. Residues 473 to 480 (GQSLSWYN) lie on the Lumenal side of the membrane. Residues 481-501 (YFYIAVCLYGTATVAKIILIH) form a helical membrane-spanning segment. At 502–515 (TLAKRFYYVNASDL) the chain is on the cytoplasmic side. A helical membrane pass occupies residues 516 to 538 (YLGELFFDTSLFVHCGFLVALTA). At 539 to 542 (QGFC) the chain is on the lumenal side. The helical transmembrane segment at 543–562 (SAFMSAVWVAFPLLTKLCVY) threads the bilayer. Topologically, residues 563–573 (KDFKKHGAKGR) are cytoplasmic. Residues 574–594 (FIALYLLGMFIPYLYGLYLIW) form a helical membrane-spanning segment. The Lumenal portion of the chain corresponds to 595–615 (AVFEMFTPILGRSGSEIPPDV). Residues 616–636 (VLASILAVCVMILSSYFITFI) traverse the membrane as a helical segment. Over 637 to 645 (YLVNSTKKT) the chain is Cytoplasmic. The helical transmembrane segment at 646–666 (ILTLILVCAVTFLLVCSGAFF) threads the bilayer. Topologically, residues 667 to 898 (PYSSNPDSPK…WVSTYSLFVF (232 aa)) are lumenal. Residue Asn-724 is glycosylated (N-linked (GlcNAc...) asparagine).

The protein belongs to the peptidase M28 family. The cofactor is Zn(2+). In terms of tissue distribution, widely expressed, with highest levels in ovary, kidney, hypothalamus and hippocampus. Within the ovarian follicle, expressed in granulosa cells, but not in oocytes. Present in both preantral and antral follicles, but not in atretic antral follicle.

Its subcellular location is the endoplasmic reticulum membrane. Functionally, within the ovary, required for the organization of somatic cells and oocytes into discrete follicular structures. The sequence is that of Endoplasmic reticulum metallopeptidase 1 from Rattus norvegicus (Rat).